Here is a 186-residue protein sequence, read N- to C-terminus: Large ribosomal subunit protein uL10 (186 aa).

This sequence belongs to the universal ribosomal protein uL10 family. In terms of assembly, part of the ribosomal stalk of the 50S ribosomal subunit. The N-terminus interacts with L11 and the large rRNA to form the base of the stalk. The C-terminus forms an elongated spine to which L12 dimers bind in a sequential fashion forming a multimeric L10(L12)X complex.

Its function is as follows. Forms part of the ribosomal stalk, playing a central role in the interaction of the ribosome with GTP-bound translation factors. In Streptomyces virginiae (Streptomyces cinnamonensis), this protein is Large ribosomal subunit protein uL10 (rplJ).